A 238-amino-acid polypeptide reads, in one-letter code: Flagellar L-ring protein (238 aa).

Residues 1-17 (MKRRLLAAGCAMLLLSG) form the signal peptide. Cys-18 carries the N-palmitoyl cysteine lipid modification. Cys-18 carries S-diacylglycerol cysteine lipidation. The disordered stretch occupies residues 22-50 (RQQPSPVPPVTQPQAYAEPEDTAANPGSL).

The protein belongs to the FlgH family. In terms of assembly, the basal body constitutes a major portion of the flagellar organelle and consists of four rings (L,P,S, and M) mounted on a central rod.

The protein localises to the cell outer membrane. The protein resides in the bacterial flagellum basal body. Assembles around the rod to form the L-ring and probably protects the motor/basal body from shearing forces during rotation. In Nitratidesulfovibrio vulgaris (strain DSM 19637 / Miyazaki F) (Desulfovibrio vulgaris), this protein is Flagellar L-ring protein.